A 346-amino-acid polypeptide reads, in one-letter code: Dihydroorotase (346 aa).

Residues His13 and His15 each contribute to the Zn(2+) site. Residues His15–Arg17 and Asn41 contribute to the substrate site. The Zn(2+) site is built by Lys99, His136, and His174. Lys99 is modified (N6-carboxylysine). His136 is a substrate binding site. Residue Leu219 participates in substrate binding. Residue Asp247 participates in Zn(2+) binding. The active site involves Asp247. Substrate-binding residues include His251 and Ala263.

This sequence belongs to the metallo-dependent hydrolases superfamily. DHOase family. Class II DHOase subfamily. Homodimer. Zn(2+) is required as a cofactor.

The enzyme catalyses (S)-dihydroorotate + H2O = N-carbamoyl-L-aspartate + H(+). Its pathway is pyrimidine metabolism; UMP biosynthesis via de novo pathway; (S)-dihydroorotate from bicarbonate: step 3/3. Catalyzes the reversible cyclization of carbamoyl aspartate to dihydroorotate. This chain is Dihydroorotase, found in Chelativorans sp. (strain BNC1).